The primary structure comprises 549 residues: uncharacterized protein (549 aa).

12 consecutive transmembrane segments (helical) span residues 1–21, 28–48, 50–70, 85–105, 106–126, 165–185, 187–207, 222–242, 278–298, 310–330, 361–381, and 398–418; these read MEIF…GVVT, IPLP…TFGL, VEFD…FADG, IFGL…FLIY, WVVP…LSPT, FAVA…TVEF, KVAI…GRSL, IVLL…IGVS, LEFV…PGIL, NVEI…LMLV, ILIA…VLSI, and VFLA…MLPI.

The protein belongs to the monovalent cation:proton antiporter 1 (CPA1) transporter (TC 2.A.36) family.

The protein resides in the cell inner membrane. This is an uncharacterized protein from Escherichia coli (strain K12).